The chain runs to 330 residues: Complement factor H-related protein 1 (330 aa).

Positions 1-18 (MWLLVSVILISRISSVGG) are cleaved as a signal peptide. Sushi domains follow at residues 22–84 (FCDF…PKCL), 85–142 (RLCF…KCRS), 145–203 (TSCV…QCKD), 206–264 (GKCG…KCLH), and 273–329 (MENY…TCAK). 10 disulfides stabilise this stretch: Cys23-Cys72, Cys55-Cys83, Cys87-Cys129, Cys114-Cys140, Cys147-Cys190, Cys176-Cys201, Cys208-Cys251, Cys237-Cys262, Cys266-Cys317, and Cys300-Cys327. N-linked (GlcNAc...) asparagine glycosylation occurs at Asn126. A glycan (N-linked (GlcNAc...) asparagine) is linked at Asn194.

As to quaternary structure, head-to-tail homodimer and heterodimer with CFHR2 or CFHR5. (Microbial infection) Interacts with C.albicans GPD2; the interaction is direct and leads to the degradation of C3. In terms of processing, N-glycosylated. Two forms are observed; one with a single side chain and the other with two. In terms of tissue distribution, expressed by the liver and secreted in plasma.

It is found in the secreted. Its function is as follows. Involved in complement regulation. The dimerized forms have avidity for tissue-bound complement fragments and efficiently compete with the physiological complement inhibitor CFH. Can associate with lipoproteins and may play a role in lipid metabolism. The polypeptide is Complement factor H-related protein 1 (CFHR1) (Homo sapiens (Human)).